A 216-amino-acid polypeptide reads, in one-letter code: Uracil phosphoribosyltransferase (216 aa).

5-phospho-alpha-D-ribose 1-diphosphate-binding positions include arginine 85, arginine 110, and 135–143; that span reads DPMVATGYS. Residues isoleucine 200 and 205–207 contribute to the uracil site; that span reads GDA. Aspartate 206 is a binding site for 5-phospho-alpha-D-ribose 1-diphosphate.

This sequence belongs to the UPRTase family. Mg(2+) is required as a cofactor.

It carries out the reaction UMP + diphosphate = 5-phospho-alpha-D-ribose 1-diphosphate + uracil. The protein operates within pyrimidine metabolism; UMP biosynthesis via salvage pathway; UMP from uracil: step 1/1. Its activity is regulated as follows. Allosterically activated by GTP. In terms of biological role, catalyzes the conversion of uracil and 5-phospho-alpha-D-ribose 1-diphosphate (PRPP) to UMP and diphosphate. This chain is Uracil phosphoribosyltransferase, found in Paraburkholderia phymatum (strain DSM 17167 / CIP 108236 / LMG 21445 / STM815) (Burkholderia phymatum).